We begin with the raw amino-acid sequence, 1925 residues long: Cilia- and flagella-associated protein 65 (1925 aa).

A helical transmembrane segment spans residues 188 to 208 (FFTVIPQPIFLSPGITLTLPI). The 110-residue stretch at 877–986 (QLKLDTHKSL…THYMLRLVGV (110 aa)) folds into the MSP domain. Residues 1525-1550 (SQQLMRQYHKELQEWKDEKVRQEVEF) adopt a coiled-coil conformation. Disordered regions lie at residues 1645–1667 (KRKA…WGPV) and 1736–1823 (SSWE…PESQ). 2 stretches are compositionally biased toward basic and acidic residues: residues 1649–1661 (PREE…EKSP) and 1739–1762 (EDGK…KKEE). Residues 1763–1804 (GEEEKGEEEEEELEEEEEEEEETEEEELGKEEIEEKEEERDE) are compositionally biased toward acidic residues.

Belongs to the CFAP65 family. In terms of assembly, interacts with CFAP47.

It localises to the cell projection. The protein resides in the cilium. Its subcellular location is the flagellum membrane. It is found in the cytoplasmic vesicle. The protein localises to the secretory vesicle. It localises to the acrosome membrane. The protein resides in the cytoplasm. Functionally, plays a role in flagellar formation and sperm motility. This chain is Cilia- and flagella-associated protein 65, found in Homo sapiens (Human).